The chain runs to 93 residues: DNA-binding protein Fis (93 aa).

The H-T-H motif DNA-binding region spans 74-93; the sequence is QTRAAQMMGINRGTLRKKLK.

It belongs to the transcriptional regulatory Fis family. Homodimer.

Its function is as follows. Activates ribosomal RNA transcription. Plays a direct role in upstream activation of rRNA promoters. The chain is DNA-binding protein Fis from Proteus vulgaris.